Consider the following 198-residue polypeptide: Pyridoxal 5'-phosphate synthase subunit PdxT (198 aa).

Glycine 49–serine 51 is a binding site for L-glutamine. Cysteine 81 functions as the Nucleophile in the catalytic mechanism. L-glutamine-binding positions include arginine 113 and isoleucine 141–arginine 142. Catalysis depends on charge relay system residues histidine 177 and glutamate 179.

Belongs to the glutaminase PdxT/SNO family. In the presence of PdxS, forms a dodecamer of heterodimers. Only shows activity in the heterodimer.

It carries out the reaction aldehydo-D-ribose 5-phosphate + D-glyceraldehyde 3-phosphate + L-glutamine = pyridoxal 5'-phosphate + L-glutamate + phosphate + 3 H2O + H(+). The enzyme catalyses L-glutamine + H2O = L-glutamate + NH4(+). The protein operates within cofactor biosynthesis; pyridoxal 5'-phosphate biosynthesis. In terms of biological role, catalyzes the hydrolysis of glutamine to glutamate and ammonia as part of the biosynthesis of pyridoxal 5'-phosphate. The resulting ammonia molecule is channeled to the active site of PdxS. The protein is Pyridoxal 5'-phosphate synthase subunit PdxT of Mycobacterium avium (strain 104).